We begin with the raw amino-acid sequence, 337 residues long: Large ribosomal subunit protein uL3 (337 aa).

The tract at residues 1-29 is disordered; that stretch reads MPKINRPRRGSLAFSPRKRAQSPIPKYKS.

Belongs to the universal ribosomal protein uL3 family. In terms of assembly, part of the 50S ribosomal subunit. Forms a cluster with proteins L14 and L24e.

One of the primary rRNA binding proteins, it binds directly near the 3'-end of the 23S rRNA, where it nucleates assembly of the 50S subunit. This is Large ribosomal subunit protein uL3 from Methanoregula boonei (strain DSM 21154 / JCM 14090 / 6A8).